The chain runs to 307 residues: Retron Ec86 putative ribosyltransferase/DNA-binding protein (307 aa).

In terms of biological role, possible ribosyltransferase/DNA-binding component of antiviral defense system retron Ec86, composed of a non-coding RNA (ncRNA), a ribosyltransferase/DNA-binding protein and a reverse transcriptase (RT). Expression of the 3-gene retron confers protection against bacteriophages T5. At multiplicity of infection (MOI) of 0.02 cultures grow normally when infected with T5 without collapsing, at MOI 2 cultures enter growth stasis. This is Retron Ec86 putative ribosyltransferase/DNA-binding protein from Escherichia coli.